A 183-amino-acid polypeptide reads, in one-letter code: Probable chemoreceptor glutamine deamidase CheD (183 aa).

Belongs to the CheD family.

It catalyses the reaction L-glutaminyl-[protein] + H2O = L-glutamyl-[protein] + NH4(+). In terms of biological role, probably deamidates glutamine residues to glutamate on methyl-accepting chemotaxis receptors (MCPs), playing an important role in chemotaxis. This Zymomonas mobilis subsp. mobilis (strain ATCC 31821 / ZM4 / CP4) protein is Probable chemoreceptor glutamine deamidase CheD.